The chain runs to 544 residues: Tyrosine-protein kinase fynb (544 aa).

The N-myristoyl glycine moiety is linked to residue Gly2. 2 S-palmitoyl cysteine lipidation sites follow: Cys3 and Cys6. The region spanning 89 to 150 (TGVTLFVALY…PSNYVAPVDS (62 aa)) is the SH3 domain. An SH2 domain is found at 156–253 (WYFGKLGRKD…GLCCRLVVPC (98 aa)). A Protein kinase domain is found at 278–531 (LQLIKRLGNG…YLQAFLEDYF (254 aa)). ATP is bound by residues 284 to 292 (LGNGQFGEV) and Lys306. Asp397 acts as the Proton acceptor in catalysis. Tyr427 carries the post-translational modification Phosphotyrosine; by autocatalysis. Position 538 is a phosphotyrosine (Tyr538).

Belongs to the protein kinase superfamily. Tyr protein kinase family. SRC subfamily. Requires Mn(2+) as cofactor.

Its subcellular location is the cytoplasm. The catalysed reaction is L-tyrosyl-[protein] + ATP = O-phospho-L-tyrosyl-[protein] + ADP + H(+). Inhibited by phosphorylation of Tyr-538 by leukocyte common antigen and activated by dephosphorylation of this site. In terms of biological role, tyrosine-protein kinase implicated in the control of cell growth. Plays a role in the regulation of intracellular calcium levels. Required in brain development and mature brain function with important roles in the regulation of axon growth, axon guidance, and neurite extension. Role in CNTN1-mediated signaling. The sequence is that of Tyrosine-protein kinase fynb (fynb) from Danio rerio (Zebrafish).